The primary structure comprises 700 residues: Elongation factor G (700 aa).

Positions 6 to 286 constitute a tr-type G domain; sequence HKVRNIGIMA…AVIDYLPSPL (281 aa). GTP-binding positions include 15 to 22, 79 to 83, and 133 to 136; these read AHIDAGKT, DTPGH, and NKMD.

Belongs to the TRAFAC class translation factor GTPase superfamily. Classic translation factor GTPase family. EF-G/EF-2 subfamily.

The protein resides in the cytoplasm. In terms of biological role, catalyzes the GTP-dependent ribosomal translocation step during translation elongation. During this step, the ribosome changes from the pre-translocational (PRE) to the post-translocational (POST) state as the newly formed A-site-bound peptidyl-tRNA and P-site-bound deacylated tRNA move to the P and E sites, respectively. Catalyzes the coordinated movement of the two tRNA molecules, the mRNA and conformational changes in the ribosome. This is Elongation factor G from Leifsonia xyli subsp. xyli (strain CTCB07).